A 528-amino-acid chain; its full sequence is uncharacterized protein (528 aa).

The segment at 1 to 51 is disordered; sequence MEHPKRPTPKNEALHIDASGRGESSFSVHRSHSGGHEPFAPSPGSSIGASV. A run of 2 repeats spans residues 185-213 and 285-313. Residues 185 to 313 are 2 X 29 AA repeats; sequence EQEEEYISNS…EEKRKLQQAL (129 aa). 2 disordered regions span residues 467–497 and 509–528; these read RAHG…NNDT and TVHP…DSHY. Residues 472-496 are compositionally biased toward polar residues; the sequence is SPPTVVVQPSTSRAGSNSTANINND.

This is an uncharacterized protein from Caenorhabditis elegans.